A 486-amino-acid polypeptide reads, in one-letter code: Cysteine--tRNA ligase (486 aa).

Cys29 provides a ligand contact to Zn(2+). The short motif at 31 to 41 is the 'HIGH' region element; that stretch reads VTVYDYCHLGH. Cys214, His239, and Glu243 together coordinate Zn(2+). Positions 271 to 275 match the 'KMSKS' region motif; sequence KMSKS. Lys274 lines the ATP pocket.

The protein belongs to the class-I aminoacyl-tRNA synthetase family. Monomer. Zn(2+) is required as a cofactor.

The protein localises to the cytoplasm. The catalysed reaction is tRNA(Cys) + L-cysteine + ATP = L-cysteinyl-tRNA(Cys) + AMP + diphosphate. This Trichormus variabilis (strain ATCC 29413 / PCC 7937) (Anabaena variabilis) protein is Cysteine--tRNA ligase.